The primary structure comprises 283 residues: Thymidylate synthase (283 aa).

Arg22 is a dUMP binding site. Cys160 serves as the catalytic Nucleophile. DUMP contacts are provided by residues 180-183, Asn191, and 221-223; these read RSCD and HIY. (6R)-5,10-methylene-5,6,7,8-tetrahydrofolate is bound at residue Asp183. Ser282 contributes to the (6R)-5,10-methylene-5,6,7,8-tetrahydrofolate binding site.

Belongs to the thymidylate synthase family. Bacterial-type ThyA subfamily. Homodimer.

Its subcellular location is the cytoplasm. The enzyme catalyses dUMP + (6R)-5,10-methylene-5,6,7,8-tetrahydrofolate = 7,8-dihydrofolate + dTMP. It functions in the pathway pyrimidine metabolism; dTTP biosynthesis. Catalyzes the reductive methylation of 2'-deoxyuridine-5'-monophosphate (dUMP) to 2'-deoxythymidine-5'-monophosphate (dTMP) while utilizing 5,10-methylenetetrahydrofolate (mTHF) as the methyl donor and reductant in the reaction, yielding dihydrofolate (DHF) as a by-product. This enzymatic reaction provides an intracellular de novo source of dTMP, an essential precursor for DNA biosynthesis. The polypeptide is Thymidylate synthase (Shewanella sediminis (strain HAW-EB3)).